The primary structure comprises 314 residues: Putative glycosyltransferase ORF31 (314 aa).

The protein belongs to the glycosyltransferase group 1 family.

This chain is Putative glycosyltransferase ORF31, found in Haloarcula hispanica (His1V).